A 639-amino-acid polypeptide reads, in one-letter code: UvrABC system protein C (639 aa).

The GIY-YIG domain maps to 20-97 (ERSGVYRMFD…IKKFQPKFNI (78 aa)). Positions 207 to 242 (KELQENLSRKMEELSSQMRFEEAAEIRDRIKALSYV) constitute a UVR domain.

Belongs to the UvrC family. As to quaternary structure, interacts with UvrB in an incision complex.

The protein localises to the cytoplasm. Functionally, the UvrABC repair system catalyzes the recognition and processing of DNA lesions. UvrC both incises the 5' and 3' sides of the lesion. The N-terminal half is responsible for the 3' incision and the C-terminal half is responsible for the 5' incision. This is UvrABC system protein C from Rickettsia rickettsii (strain Iowa).